The sequence spans 317 residues: Protein RTA1 (317 aa).

Residues 1–16 are Extracellular-facing; it reads MAKDGFELYRYTPELG. Residues 17–37 traverse the membrane as a helical segment; sequence ASILFTVLFAVSGVAFVILLF. Topologically, residues 38–64 are cytoplasmic; it reads HYSVKSKRRVGSLMKSQPVLRYYGTVN. The helical transmembrane segment at 65–85 threads the bilayer; it reads LAGAYIPFIFGCFVECVGFAF. Residues 86–99 lie on the Extracellular side of the membrane; it reads RCKSSKDTTLLNPY. Residues 100-120 form a helical membrane-spanning segment; the sequence is IIQTVFLLVSPTLYAASIYMI. The Cytoplasmic portion of the chain corresponds to 121 to 142; sequence FGRMATLLFAENLMIMPARFNT. A helical transmembrane segment spans residues 143–163; the sequence is TIFVIGDVGSLLLQAIGGAMM. Topologically, residues 164–178 are extracellular; it reads SKVTSASSGSHLVTA. The chain crosses the membrane as a helical span at residues 179–199; it reads GLFIQIAFFGLFIINEVLFIF. Over 200-214 the chain is Cytoplasmic; sequence KMSKKPTNVSVRYGS. A helical transmembrane segment spans residues 215–235; sequence WKYLNIALLVNSFLILIRSIV. Residues 236–259 lie on the Extracellular side of the membrane; it reads RAVEFIQGYDGEIASHEWYLYIFD. Residues 260–280 form a helical membrane-spanning segment; that stretch reads GLPMFLLVLIFIVAFPLINIF. Topologically, residues 281 to 317 are cytoplasmic; the sequence is RIHEESIQAQQSARFDGTDYPDVEVTSIEEDLASKSE.

This sequence belongs to the lipid-translocating exporter (LTE) (TC 9.A.26.1) family.

It localises to the membrane. Its function is as follows. Involved in 7-aminocholesterol resistance. This Saccharomyces cerevisiae (strain ATCC 204508 / S288c) (Baker's yeast) protein is Protein RTA1 (RTA1).